The chain runs to 729 residues: Methionine--tRNA ligase (729 aa).

The 'HIGH' region signature appears at 12–22; sequence PYVNNIPHLGN. Zn(2+) is bound by residues cysteine 143, cysteine 146, cysteine 155, and cysteine 158. The short motif at 330–334 is the 'KMSKS' region element; sequence KFSKS. Lysine 333 is an ATP binding site. The 106-residue stretch at 565-670 folds into the tRNA-binding domain; sequence FSEQVCLKVV…DNPIPGERII (106 aa).

It belongs to the class-I aminoacyl-tRNA synthetase family. MetG type 1 subfamily. As to quaternary structure, homodimer. It depends on Zn(2+) as a cofactor.

The protein localises to the cytoplasm. The enzyme catalyses tRNA(Met) + L-methionine + ATP = L-methionyl-tRNA(Met) + AMP + diphosphate. In terms of biological role, is required not only for elongation of protein synthesis but also for the initiation of all mRNA translation through initiator tRNA(fMet) aminoacylation. This Borrelia hermsii (strain HS1 / DAH) protein is Methionine--tRNA ligase.